The primary structure comprises 187 residues: Large ribosomal subunit protein uL22 (187 aa).

A disordered region spans residues 155 to 187; it reads DAVSRAAPTDDAPAKKKLSKKKLARQKEKMMRE. The segment covering 169–178 has biased composition (basic residues); sequence KKKLSKKKLA.

This sequence belongs to the universal ribosomal protein uL22 family.

The chain is Large ribosomal subunit protein uL22 (RpL17) from Lonomia obliqua (Moth).